Reading from the N-terminus, the 146-residue chain is Large ribosomal subunit protein uL15 (146 aa).

Residues 1–13 are compositionally biased toward basic and acidic residues; that stretch reads MKLHELHSAEGSR. The interval 1–55 is disordered; the sequence is MKLHELHSAEGSRRNRKRVGRGTSSGYGKTSGRGQKGQLARQGGHTRLGFEGGQM. A compositionally biased stretch (gly residues) spans 23–35; that stretch reads TSSGYGKTSGRGQ.

This sequence belongs to the universal ribosomal protein uL15 family. As to quaternary structure, part of the 50S ribosomal subunit.

Functionally, binds to the 23S rRNA. This is Large ribosomal subunit protein uL15 from Lactobacillus helveticus (strain DPC 4571).